The sequence spans 205 residues: Protein N-terminal glutamine amidohydrolase (205 aa).

Active-site residues include cysteine 20, histidine 74, and aspartate 90.

It belongs to the NTAQ1 family. Monomer.

The enzyme catalyses N-terminal L-glutaminyl-[protein] + H2O = N-terminal L-glutamyl-[protein] + NH4(+). Its function is as follows. Mediates the side-chain deamidation of N-terminal glutamine residues to glutamate, an important step in N-end rule pathway of protein degradation. Conversion of the resulting N-terminal glutamine to glutamate renders the protein susceptible to arginylation, polyubiquitination and degradation as specified by the N-end rule. Does not act on substrates with internal or C-terminal glutamine and does not act on non-glutamine residues in any position. The sequence is that of Protein N-terminal glutamine amidohydrolase (tun) from Drosophila grimshawi (Hawaiian fruit fly).